Reading from the N-terminus, the 481-residue chain is UDP-glycosyltransferase 85C2 (481 aa).

The active-site Proton acceptor is the histidine 23. Residue histidine 23 participates in an anthocyanidin binding. Aspartate 120 (charge relay) is an active-site residue. Residues threonine 143, glutamine 362, histidine 377, tryptophan 380, serine 382, glutamate 385, aspartate 401, and glutamine 402 each contribute to the UDP-alpha-D-glucose site.

This sequence belongs to the UDP-glycosyltransferase family.

It carries out the reaction steviol + UDP-alpha-D-glucose = steviolmonoside + UDP + H(+). The enzyme catalyses steviolmonoside + UDP-alpha-D-glucose = rubusoside + UDP. Its function is as follows. Involved in the biosynthesis of steviol glycosides in leaves. Converts steviol to the mono-glycoside steviolmonoside. Converts the mono-glycoside steviolmonoside to the bi-glycoside rubusoside. In Stevia rebaudiana (Stevia), this protein is UDP-glycosyltransferase 85C2.